The sequence spans 71 residues: Translation initiation factor IF-1 (71 aa).

The S1-like domain occupies 1–71 (MSKDDLIQFT…LTKGRVIHRH (71 aa)).

The protein belongs to the IF-1 family. As to quaternary structure, component of the 30S ribosomal translation pre-initiation complex which assembles on the 30S ribosome in the order IF-2 and IF-3, IF-1 and N-formylmethionyl-tRNA(fMet); mRNA recruitment can occur at any time during PIC assembly.

It is found in the cytoplasm. Its function is as follows. One of the essential components for the initiation of protein synthesis. Stabilizes the binding of IF-2 and IF-3 on the 30S subunit to which N-formylmethionyl-tRNA(fMet) subsequently binds. Helps modulate mRNA selection, yielding the 30S pre-initiation complex (PIC). Upon addition of the 50S ribosomal subunit IF-1, IF-2 and IF-3 are released leaving the mature 70S translation initiation complex. This is Translation initiation factor IF-1 from Rickettsia felis (strain ATCC VR-1525 / URRWXCal2) (Rickettsia azadi).